The chain runs to 282 residues: Acetyl-coenzyme A carboxylase carboxyl transferase subunit beta (282 aa).

In terms of domain architecture, CoA carboxyltransferase N-terminal spans 25-282 (VWRKCPHCNE…SQMLRIFMKQ (258 aa)). The Zn(2+) site is built by Cys-29, Cys-32, Cys-48, and Cys-51. The C4-type zinc finger occupies 29–51 (CPHCNEIIYAKEIERNLNVCPKC).

Belongs to the AccD/PCCB family. As to quaternary structure, acetyl-CoA carboxylase is a heterohexamer composed of biotin carboxyl carrier protein (AccB), biotin carboxylase (AccC) and two subunits each of ACCase subunit alpha (AccA) and ACCase subunit beta (AccD). It depends on Zn(2+) as a cofactor.

The protein localises to the cytoplasm. It carries out the reaction N(6)-carboxybiotinyl-L-lysyl-[protein] + acetyl-CoA = N(6)-biotinyl-L-lysyl-[protein] + malonyl-CoA. It participates in lipid metabolism; malonyl-CoA biosynthesis; malonyl-CoA from acetyl-CoA: step 1/1. In terms of biological role, component of the acetyl coenzyme A carboxylase (ACC) complex. Biotin carboxylase (BC) catalyzes the carboxylation of biotin on its carrier protein (BCCP) and then the CO(2) group is transferred by the transcarboxylase to acetyl-CoA to form malonyl-CoA. The chain is Acetyl-coenzyme A carboxylase carboxyl transferase subunit beta from Syntrophotalea carbinolica (strain DSM 2380 / NBRC 103641 / GraBd1) (Pelobacter carbinolicus).